The sequence spans 322 residues: Lactamase-like protein nscB (322 aa).

Zn(2+)-binding residues include H97, H99, D101, and H102. The active-site Proton donor/acceptor is the D101.

This sequence belongs to the metallo-beta-lactamase superfamily. It depends on Zn(2+) as a cofactor.

It participates in secondary metabolite biosynthesis. In terms of biological role, lactamase-like protein; part of the gene cluster that mediates the biosynthesis of neosartoricin B, a prenylated anthracenone that probably exhibits T-cell antiproliferative activity, suggestive of a physiological role as an immunosuppressive agent. The non-reducing polyketide synthase nscA probably synthesizes and cyclizes the decaketide backbone. The hydrolase nscB then mediates the product release through hydrolysis followed by spontaneous decarboxylation. The prenyltransferase nscD catalyzes the addition of the dimethylallyl group to the aromatic C5. The FAD-dependent monooxygenase nscC is then responsible for the stereospecific hydroxylation at C2. Neosartoricin B can be converted into two additional compounds neosartoricins C and D. Neosartoricin C is a spirocyclic compound that is cyclized through the attack of C3 hydroxyl on C14, followed by dehydration. On the other hand, neosartoricin D is a further cyclized compound in which attack of C2 on C14 in neosartoricin C results in the formation of the acetal-containing dioxabicyclo-octanone ring. Both of these compounds are novel and possibly represent related metabolites of the gene cluster. This Trichophyton rubrum (strain ATCC MYA-4607 / CBS 118892) (Athlete's foot fungus) protein is Lactamase-like protein nscB.